A 197-amino-acid chain; its full sequence is Putative manganese efflux pump MntP (197 aa).

The next 6 helical transmembrane spans lie at 8 to 28, 43 to 63, 66 to 86, 123 to 143, 146 to 166, and 177 to 197; these read VILLAIALAMDAFAVSIGLGA, VYAALYFGIAQGVMPLIGYLL, VLLGWLATAAPWIGGGILIVL, LAIATSIDAMAAGFTLNLLAL, WLACLIIAIVTAGFGFFGIYL, and KAEILGGLVLIAIGVKVMLFS.

This sequence belongs to the MntP (TC 9.B.29) family.

It is found in the cell inner membrane. In terms of biological role, probably functions as a manganese efflux pump. The sequence is that of Putative manganese efflux pump MntP from Psychrobacter arcticus (strain DSM 17307 / VKM B-2377 / 273-4).